A 183-amino-acid polypeptide reads, in one-letter code: dCTP deaminase (183 aa).

DCTP is bound by residues 97 to 102 (RSSFAR) and aspartate 113. The active-site Proton donor/acceptor is glutamate 123. Positions 155 and 162 each coordinate dCTP.

It belongs to the dCTP deaminase family. As to quaternary structure, homotrimer.

It carries out the reaction dCTP + H2O + H(+) = dUTP + NH4(+). It participates in pyrimidine metabolism; dUMP biosynthesis; dUMP from dCTP (dUTP route): step 1/2. In terms of biological role, catalyzes the deamination of dCTP to dUTP. The sequence is that of dCTP deaminase from Sulfurisphaera tokodaii (strain DSM 16993 / JCM 10545 / NBRC 100140 / 7) (Sulfolobus tokodaii).